Here is a 313-residue protein sequence, read N- to C-terminus: Curved DNA-binding protein (313 aa).

The J domain occupies 5 to 69; that stretch reads DYYKILGVSR…EKRKAYDAIG (65 aa). Residues 71–93 are disordered; sequence GWKQGQGFTPPPGWESRPGGEGV.

It is found in the cytoplasm. Its subcellular location is the nucleoid. Its function is as follows. DNA-binding protein that preferentially recognizes a curved DNA sequence. It is probably a functional analog of DnaJ; displays overlapping activities with DnaJ, but functions under different conditions, probably acting as a molecular chaperone in an adaptive response to environmental stresses other than heat shock. Lacks autonomous chaperone activity; binds native substrates and targets them for recognition by DnaK. Its activity is inhibited by the binding of CbpM. The chain is Curved DNA-binding protein from Coxiella burnetii (strain Dugway 5J108-111).